The chain runs to 265 residues: 3-methyl-2-oxobutanoate hydroxymethyltransferase (265 aa).

Mg(2+) contacts are provided by Asp45 and Asp84. 3-methyl-2-oxobutanoate contacts are provided by residues 45 to 46, Asp84, and Lys112; that span reads DS. Mg(2+) is bound at residue Glu114. Glu181 serves as the catalytic Proton acceptor.

This sequence belongs to the PanB family. In terms of assembly, homodecamer; pentamer of dimers. The cofactor is Mg(2+).

It localises to the cytoplasm. It carries out the reaction 3-methyl-2-oxobutanoate + (6R)-5,10-methylene-5,6,7,8-tetrahydrofolate + H2O = 2-dehydropantoate + (6S)-5,6,7,8-tetrahydrofolate. It functions in the pathway cofactor biosynthesis; (R)-pantothenate biosynthesis; (R)-pantoate from 3-methyl-2-oxobutanoate: step 1/2. In terms of biological role, catalyzes the reversible reaction in which hydroxymethyl group from 5,10-methylenetetrahydrofolate is transferred onto alpha-ketoisovalerate to form ketopantoate. In Yersinia enterocolitica serotype O:8 / biotype 1B (strain NCTC 13174 / 8081), this protein is 3-methyl-2-oxobutanoate hydroxymethyltransferase.